Reading from the N-terminus, the 352-residue chain is Maleylacetate reductase (352 aa).

It belongs to the iron-containing alcohol dehydrogenase family.

The catalysed reaction is 3-oxoadipate + NAD(+) = maleylacetate + NADH + H(+). It carries out the reaction 3-oxoadipate + NADP(+) = maleylacetate + NADPH + H(+). It participates in aromatic compound metabolism; 3-chlorocatechol degradation. The polypeptide is Maleylacetate reductase (clcE) (Pseudomonas knackmussii (strain DSM 6978 / CCUG 54928 / LMG 23759 / B13)).